A 325-amino-acid polypeptide reads, in one-letter code: Zinc finger C2HC domain-containing protein 1A (325 aa).

Residues 15–44 (ELLPCKICGRTFFPVALKKHGPICQKTATK) form a C2HC/C3H-type 1 zinc finger. Residues Cys19, Cys22, His34, and Cys38 each contribute to the Zn(2+) site. The tract at residues 43–83 (TKKRKTFDSSRQRAEGTDIPTVKPLKPRPEPPKKPSNWRRK) is disordered. Over residues 48–58 (TFDSSRQRAEG) the composition is skewed to basic and acidic residues. The C2HC/C3H-type 2 zinc-finger motif lies at 118–147 (DYIQCPYCQRRFNENAADRHINFCKEQAAR). Zn(2+) is bound by residues Cys122, Cys125, His137, and Cys141. The segment at 150–260 (NKGKFSTDTK…NPAPGVLTNK (111 aa)) is disordered. Low complexity-rich tracts occupy residues 177-188 (SNSPGTASSGSS) and 197-216 (GKTV…SSLG). Ser223 carries the post-translational modification Phosphoserine. At Thr244 the chain carries Phosphothreonine. Phosphoserine is present on Ser292.

Belongs to the ZC2HC1 family. Zn(2+) is required as a cofactor.

The chain is Zinc finger C2HC domain-containing protein 1A (ZC2HC1A) from Homo sapiens (Human).